A 269-amino-acid chain; its full sequence is 3-methyl-2-oxobutanoate hydroxymethyltransferase (269 aa).

D42 and D81 together coordinate Mg(2+). 3-methyl-2-oxobutanoate contacts are provided by residues 42–43 (DS), D81, and K111. E113 lines the Mg(2+) pocket. E179 (proton acceptor) is an active-site residue. Positions 250–269 (SGEFPRESHSHTEDELDDLY) are disordered. The span at 252-262 (EFPRESHSHTE) shows a compositional bias: basic and acidic residues.

It belongs to the PanB family. As to quaternary structure, homodecamer; pentamer of dimers. Mg(2+) serves as cofactor.

The protein localises to the cytoplasm. The catalysed reaction is 3-methyl-2-oxobutanoate + (6R)-5,10-methylene-5,6,7,8-tetrahydrofolate + H2O = 2-dehydropantoate + (6S)-5,6,7,8-tetrahydrofolate. Its pathway is cofactor biosynthesis; coenzyme A biosynthesis. Its function is as follows. Catalyzes the reversible reaction in which hydroxymethyl group from 5,10-methylenetetrahydrofolate is transferred onto alpha-ketoisovalerate to form ketopantoate. The polypeptide is 3-methyl-2-oxobutanoate hydroxymethyltransferase (Haloarcula marismortui (strain ATCC 43049 / DSM 3752 / JCM 8966 / VKM B-1809) (Halobacterium marismortui)).